Reading from the N-terminus, the 78-residue chain is Large ribosomal subunit protein bL28 (78 aa).

The protein belongs to the bacterial ribosomal protein bL28 family.

The protein is Large ribosomal subunit protein bL28 of Pasteurella multocida (strain Pm70).